The sequence spans 405 residues: Acetate kinase (405 aa).

Asparagine 10 contributes to the Mg(2+) binding site. Lysine 17 serves as a coordination point for ATP. Arginine 93 serves as a coordination point for substrate. The active-site Proton donor/acceptor is the aspartate 150. ATP contacts are provided by residues 210–214, 284–286, and 332–336; these read HLGNG, DMR, and GVGEN. Glutamate 386 contacts Mg(2+).

It belongs to the acetokinase family. In terms of assembly, homodimer. Mg(2+) serves as cofactor. Mn(2+) is required as a cofactor.

The protein resides in the cytoplasm. The enzyme catalyses acetate + ATP = acetyl phosphate + ADP. It functions in the pathway metabolic intermediate biosynthesis; acetyl-CoA biosynthesis; acetyl-CoA from acetate: step 1/2. In terms of biological role, catalyzes the formation of acetyl phosphate from acetate and ATP. Can also catalyze the reverse reaction. The protein is Acetate kinase of Streptomyces avermitilis (strain ATCC 31267 / DSM 46492 / JCM 5070 / NBRC 14893 / NCIMB 12804 / NRRL 8165 / MA-4680).